We begin with the raw amino-acid sequence, 100 residues long: uncharacterized protein (100 aa).

This sequence belongs to the ycf15 family.

The protein localises to the plastid. It localises to the chloroplast. This is an uncharacterized protein from Panax ginseng (Korean ginseng).